Here is a 512-residue protein sequence, read N- to C-terminus: Acid-sensing ion channel 2 (512 aa).

Topologically, residues 1–37 (MDLKESPSEGSLQPSSIQIFANTSTLHGIRHIFVYGP) are cytoplasmic. Phosphoserine is present on residues Ser-8 and Ser-11. The helical transmembrane segment at 38 to 58 (LTIRRVLWAVAFVGSLGLLLV) threads the bilayer. Residues 59-427 (ESSERVSYYF…EQKKAYEVAA (369 aa)) are Extracellular-facing. Cystine bridges form between Cys-92–Cys-193, Cys-289–Cys-364, Cys-307–Cys-360, Cys-311–Cys-358, Cys-320–Cys-342, and Cys-322–Cys-334. N-linked (GlcNAc...) asparagine glycosylation is found at Asn-365 and Asn-392. Residues 428-448 (LLGDIGGQMGLFIGASILTIL) traverse the membrane as a helical segment. The GAS motif; ion selectivity filter motif lies at 441–443 (GAS). Residues 449 to 512 (ELFDYIYELI…ALGTLEEIAC (64 aa)) lie on the Cytoplasmic side of the membrane.

This sequence belongs to the amiloride-sensitive sodium channel (TC 1.A.6) family. ASIC2 subfamily. In terms of assembly, can form homotrimers. Heterotrimer; forms functional heterotrimers producing channel with different properties. Forms heterotrimers with ASIC1; while ASIC1 determines current amplitude, ASIC2 influences the properties of the current. Forms heterotrimers with ASIC3; resulting in channels with distinct properties. Interacts with STOM; STOM regulates the gating of ASIC2-containing channels. Interacts with PICK1; promotes ASIC3 phosphorylation by PKC and activation of ASIC2/ASIC3 heterotrimers. In terms of tissue distribution, expressed by sensory neurons. Expressed by nociceptive sensory neurons, spiral ganglion (SG) neurons and the retina (at protein level). Expressed in outer nuclear layer of retina (photoreceptors) and to a lower extent in distal and proximal inner nuclear layer.

The protein localises to the cell membrane. The catalysed reaction is Na(+)(in) = Na(+)(out). It catalyses the reaction K(+)(in) = K(+)(out). The enzyme catalyses Li(+)(in) = Li(+)(out). Inhibited by the diuretic drug amiloride. Its function is as follows. Forms pH-gated trimeric sodium channels that act as postsynaptic excitatory sensors in the nervous system. Upon extracellular acidification, these channels generate rapid, transient inward currents that fully desensitize. Highly selective for sodium, they are permeable to other cations. By forming heterotrimeric channels with ASIC1, could contribute to synaptic plasticity, learning, and memory. Additionally, as acid sensors at nerve terminals, plays a role in mechanosensation and phototransduction. Has no pH-gated sodium channel activity per se but can associate with other ASICs to produce functional channels with specific properties. This Mus musculus (Mouse) protein is Acid-sensing ion channel 2.